The following is a 298-amino-acid chain: Acetyl-coenzyme A carboxylase carboxyl transferase subunit beta (298 aa).

One can recognise a CoA carboxyltransferase N-terminal domain in the interval 41 to 298 (PTIECPECHA…RIVSKLMNLP (258 aa)). Residues C45, C48, C64, and C67 each coordinate Zn(2+). The C4-type zinc finger occupies 45 to 67 (CPECHALVTRTAIAFNAYVCPSC).

Belongs to the AccD/PCCB family. As to quaternary structure, acetyl-CoA carboxylase is a heterohexamer composed of biotin carboxyl carrier protein (AccB), biotin carboxylase (AccC) and two subunits each of ACCase subunit alpha (AccA) and ACCase subunit beta (AccD). The cofactor is Zn(2+).

It localises to the cytoplasm. The catalysed reaction is N(6)-carboxybiotinyl-L-lysyl-[protein] + acetyl-CoA = N(6)-biotinyl-L-lysyl-[protein] + malonyl-CoA. It functions in the pathway lipid metabolism; malonyl-CoA biosynthesis; malonyl-CoA from acetyl-CoA: step 1/1. Functionally, component of the acetyl coenzyme A carboxylase (ACC) complex. Biotin carboxylase (BC) catalyzes the carboxylation of biotin on its carrier protein (BCCP) and then the CO(2) group is transferred by the transcarboxylase to acetyl-CoA to form malonyl-CoA. In Acinetobacter baylyi (strain ATCC 33305 / BD413 / ADP1), this protein is Acetyl-coenzyme A carboxylase carboxyl transferase subunit beta.